The primary structure comprises 312 residues: Ribosomal protein L11 methyltransferase (312 aa).

S-adenosyl-L-methionine is bound by residues Thr163, Gly184, Asp206, and Asn248.

Belongs to the methyltransferase superfamily. PrmA family.

It is found in the cytoplasm. The enzyme catalyses L-lysyl-[protein] + 3 S-adenosyl-L-methionine = N(6),N(6),N(6)-trimethyl-L-lysyl-[protein] + 3 S-adenosyl-L-homocysteine + 3 H(+). Its function is as follows. Methylates ribosomal protein L11. The polypeptide is Ribosomal protein L11 methyltransferase (Clostridium botulinum (strain Okra / Type B1)).